Here is a 323-residue protein sequence, read N- to C-terminus: Lipoyl synthase (323 aa).

[4Fe-4S] cluster contacts are provided by Cys61, Cys66, Cys72, Cys87, Cys91, Cys94, and Ser300. One can recognise a Radical SAM core domain in the interval 73–289; sequence WDKKHATFMI…ETVAYTKGFL (217 aa).

This sequence belongs to the radical SAM superfamily. Lipoyl synthase family. [4Fe-4S] cluster is required as a cofactor.

The protein localises to the cytoplasm. The catalysed reaction is [[Fe-S] cluster scaffold protein carrying a second [4Fe-4S](2+) cluster] + N(6)-octanoyl-L-lysyl-[protein] + 2 oxidized [2Fe-2S]-[ferredoxin] + 2 S-adenosyl-L-methionine + 4 H(+) = [[Fe-S] cluster scaffold protein] + N(6)-[(R)-dihydrolipoyl]-L-lysyl-[protein] + 4 Fe(3+) + 2 hydrogen sulfide + 2 5'-deoxyadenosine + 2 L-methionine + 2 reduced [2Fe-2S]-[ferredoxin]. It participates in protein modification; protein lipoylation via endogenous pathway; protein N(6)-(lipoyl)lysine from octanoyl-[acyl-carrier-protein]: step 2/2. In terms of biological role, catalyzes the radical-mediated insertion of two sulfur atoms into the C-6 and C-8 positions of the octanoyl moiety bound to the lipoyl domains of lipoate-dependent enzymes, thereby converting the octanoylated domains into lipoylated derivatives. This Sinorhizobium medicae (strain WSM419) (Ensifer medicae) protein is Lipoyl synthase.